Reading from the N-terminus, the 125-residue chain is Small ribosomal subunit protein uS13 (125 aa).

Residues 93–125 (RRGLPVRGQRTKTNARTRKGPKRTVAGKKKAGR) are disordered.

This sequence belongs to the universal ribosomal protein uS13 family. In terms of assembly, part of the 30S ribosomal subunit. Forms a loose heterodimer with protein S19. Forms two bridges to the 50S subunit in the 70S ribosome.

Its function is as follows. Located at the top of the head of the 30S subunit, it contacts several helices of the 16S rRNA. In the 70S ribosome it contacts the 23S rRNA (bridge B1a) and protein L5 of the 50S subunit (bridge B1b), connecting the 2 subunits; these bridges are implicated in subunit movement. Contacts the tRNAs in the A and P-sites. The polypeptide is Small ribosomal subunit protein uS13 (Renibacterium salmoninarum (strain ATCC 33209 / DSM 20767 / JCM 11484 / NBRC 15589 / NCIMB 2235)).